Consider the following 330-residue polypeptide: Glycerol-3-phosphate dehydrogenase [NAD(P)+] (330 aa).

NADPH contacts are provided by Ser-11, Phe-12, Arg-32, and Lys-106. The sn-glycerol 3-phosphate site is built by Lys-106, Gly-133, and Ser-135. An NADPH-binding site is contributed by Ala-137. Sn-glycerol 3-phosphate contacts are provided by Lys-188, Asp-241, Ser-251, Arg-252, and Asn-253. The active-site Proton acceptor is the Lys-188. Arg-252 serves as a coordination point for NADPH. Val-276 and Glu-278 together coordinate NADPH.

This sequence belongs to the NAD-dependent glycerol-3-phosphate dehydrogenase family.

The protein resides in the cytoplasm. The enzyme catalyses sn-glycerol 3-phosphate + NAD(+) = dihydroxyacetone phosphate + NADH + H(+). It catalyses the reaction sn-glycerol 3-phosphate + NADP(+) = dihydroxyacetone phosphate + NADPH + H(+). Its pathway is membrane lipid metabolism; glycerophospholipid metabolism. Functionally, catalyzes the reduction of the glycolytic intermediate dihydroxyacetone phosphate (DHAP) to sn-glycerol 3-phosphate (G3P), the key precursor for phospholipid synthesis. The protein is Glycerol-3-phosphate dehydrogenase [NAD(P)+] of Clostridium botulinum (strain Eklund 17B / Type B).